A 198-amino-acid polypeptide reads, in one-letter code: MIEFVYPHTHLVAGVDEVGRGPLVGAVVTAAVILDPARPIAGLNDSKKLSEKRRLALCEEIKEKALSWSLGRAEPYEIDELNILHATMLAMQRAVAGLHIAPEYVLIDGNRCPKLPMPSMAVVKGDSRVPEISAASILAKVTRDAEMAALDIVFPQYGFAQHKGYPTAFHLEKLAEYGATEHHRRSFGPVKRALGLAS.

The RNase H type-2 domain maps to 10–198; sequence HLVAGVDEVG…PVKRALGLAS (189 aa). A divalent metal cation contacts are provided by aspartate 16, glutamate 17, and aspartate 108.

Belongs to the RNase HII family. Mn(2+) serves as cofactor. Mg(2+) is required as a cofactor.

The protein resides in the cytoplasm. It carries out the reaction Endonucleolytic cleavage to 5'-phosphomonoester.. Endonuclease that specifically degrades the RNA of RNA-DNA hybrids. In Escherichia coli (strain ATCC 8739 / DSM 1576 / NBRC 3972 / NCIMB 8545 / WDCM 00012 / Crooks), this protein is Ribonuclease HII.